The sequence spans 112 residues: Diuretic hormone class 2 (112 aa).

Positions 1–24 (MVRATCLLASCVLFALLLIVPASA) are cleaved as a signal peptide. A propeptide spanning residues 25–71 (YPRYPSNYFREEGQYEPEEIMDMLNRLGNLIQMERKMENYKEDITSE) is cleaved from the precursor. P104 carries the post-translational modification Proline amide. A propeptide spanning residues 108–112 (RRDAH) is cleaved from the precursor.

Expressed in corpora cardiaca (CC), corpora allata (CA), antennal lobe (AL) and gnathal ganglion (GNG) (at protein level). Expression in CC, CA and AL detected in most animals, expression in GNG in few animals (at protein level).

It is found in the secreted. In terms of biological role, regulation of fluid secretion. Stimulates Malpighian tubule fluid secretion. This is Diuretic hormone class 2 from Agrotis ipsilon (Black cutworm moth).